The primary structure comprises 447 residues: Serine/threonine-protein phosphatase 2A 55 kDa regulatory subunit B delta isoform (447 aa).

WD repeat units lie at residues 26–65 (AEADIISTVEFNCSGDLLATGDKGGRVVIFQREQENKSRP), 91–132 (EIEE…KRVE), 175–213 (AHTYHINSISVNSDHETYLSADDLRINLWHLEITDRSFN), 224–264 (ELTE…LCDR), 283–321 (EIISSISDVKFSNSGRYMMTRDYLSVKVWDLNMESRPVE), 338–379 (ENDC…DITL), and 414–447 (DFNKKILHTAWHPTDNIIAVAATNNLYIFQDKVN).

The protein belongs to the phosphatase 2A regulatory subunit B family. PP2A consists of a common heterodimeric core enzyme, composed of a 36 kDa catalytic subunit (subunit C) and a 65 kDa constant regulatory subunit (PR65 or subunit A), that associates with a variety of regulatory subunits. Proteins that associate with the core dimer include three families of regulatory subunits B (the R2/B/PR55/B55, R3/B''/PR72/PR130/PR59 and R5/B'/B56 families), the 48 kDa variable regulatory subunit, viral proteins, and cell signaling molecules. Interacts with ensa (when phosphorylated at 'Ser-67') and arpp19 (when phosphorylated at 'Ser-67'), leading to inhibit PP2A activity.

The protein localises to the cytoplasm. Functionally, substrate-recognition subunit of protein phosphatase 2A (PP2A) that plays a key role in cell cycle by controlling mitosis entry and exit. The activity of PP2A complexes containing ppp2r2d (PR55-delta) fluctuate during the cell cycle: the activity is high in interphase and low in mitosis. During mitosis, activity of PP2A is inhibited via interaction with phosphorylated ensa and arpp19 inhibitors. PP2A complexes containing ppp2r2d (PR55-delta) also regulate the activity of TGF-beta/Activin/Nodal signaling by restricting receptor activity. Within the PP2A complexes, the B regulatory subunits modulate substrate selectivity and catalytic activity, and may also direct the localization of the catalytic enzyme to a particular subcellular compartment. The protein is Serine/threonine-protein phosphatase 2A 55 kDa regulatory subunit B delta isoform (ppp2r2d) of Xenopus tropicalis (Western clawed frog).